A 346-amino-acid polypeptide reads, in one-letter code: Phenylalanine--tRNA ligase alpha subunit (346 aa).

Residue Glu-261 participates in Mg(2+) binding.

It belongs to the class-II aminoacyl-tRNA synthetase family. Phe-tRNA synthetase alpha subunit type 1 subfamily. In terms of assembly, tetramer of two alpha and two beta subunits. Mg(2+) serves as cofactor.

It localises to the cytoplasm. The enzyme catalyses tRNA(Phe) + L-phenylalanine + ATP = L-phenylalanyl-tRNA(Phe) + AMP + diphosphate + H(+). In Streptococcus agalactiae serotype III (strain NEM316), this protein is Phenylalanine--tRNA ligase alpha subunit.